The chain runs to 59 residues: Large ribosomal subunit protein uL30 (59 aa).

The protein belongs to the universal ribosomal protein uL30 family. As to quaternary structure, part of the 50S ribosomal subunit.

This is Large ribosomal subunit protein uL30 from Pelotomaculum thermopropionicum (strain DSM 13744 / JCM 10971 / SI).